The chain runs to 451 residues: MPGRTRPSCRLAITFTPRPDSATPRAGRAAPATGRRSNRSRSTLSATASPMPRRPHRIRSLGLLDRRDNYLDMLRTGGGIESPLIEAGALSDAMGLEPGCGRLWIKADHGLPVAGSIKARGGIHEVLEFAETLAVREGLLSPGQDCRVLAEPAAREVFGRHQVAVGSTGNLGLSIGVAASALGFRAAVHMSADAKEWKKERLRRRGVEVVEHAGDYERAVAAGRSQAQADPFSHFVDDERSLSLLLGYSAAALHLRGQLAEQGIVVDAKHPLFVYLPCGVGGAPAGITFGLRQLLGPHVHCFFAEPVQSPCFLVQMAAPAGTHPSVYDLGLTNRTEADGLAVPRASLLAAGLMQPLLSGIFTVRDDTLFEHLVRVLDATGERIEPSAAAGFSGPALLTGSDGGRLWLRAQGLDVQLPQATHLVWTTGGLFVPEAEHQRFEARGRSLLEAAA.

Positions 1–55 are disordered; that stretch reads MPGRTRPSCRLAITFTPRPDSATPRAGRAAPATGRRSNRSRSTLSATASPMPRRP. Positions 22–35 are enriched in low complexity; the sequence is ATPRAGRAAPATGR. N6-(pyridoxal phosphate)lysine is present on Lys118.

This sequence belongs to the serine/threonine dehydratase family. DsdA subfamily. Requires pyridoxal 5'-phosphate as cofactor.

The enzyme catalyses D-serine = pyruvate + NH4(+). The polypeptide is Probable D-serine dehydratase (Paracidovorax citrulli (strain AAC00-1) (Acidovorax citrulli)).